Consider the following 1112-residue polypeptide: Electrogenic sodium bicarbonate cotransporter 4 (1112 aa).

The span at 1–13 shows a compositional bias: basic and acidic residues; the sequence is MKVEEKAGVKKLE. 3 disordered regions span residues 1–80, 220–255, and 439–469; these read MKVE…SSLG, KKPI…HHST, and GRSG…NEAE. Over 1–513 the chain is Cytoplasmic; it reads MKVEEKAGVK…DFYDGFHIQS (513 aa). Polar residues-rich tracts occupy residues 53 to 67 and 233 to 244; these read QRVQ…SQQD and SVSTTNRSSARS. A compositionally biased stretch (gly residues) spans 444–465; it reads SAGGGGSGGGAGGSGAGGGGSG. The helical transmembrane segment at 514–536 threads the bilayer; that stretch reads ISAVLFIYLGCITNAITFGGLLG. Over 537–547 the chain is Extracellular; the sequence is DATDNYQGVME. The helical transmembrane segment at 548 to 579 threads the bilayer; the sequence is SFLGTAMAGSLFCLFSGQPLIILSSTGPILIF. The Cytoplasmic portion of the chain corresponds to 580-598; that stretch reads EKLLFDFSKANGLDYMEFR. A helical transmembrane segment spans residues 599 to 620; sequence LWIGLHSAIQCLILVATDASFI. The Extracellular portion of the chain corresponds to 621–734; the sequence is IKYITRFTEE…LGSSCQFVPD (114 aa). Residues 735–753 traverse the membrane as a helical segment; sequence LALMSFILFFGTYSMTLTL. Topologically, residues 754-772 are cytoplasmic; it reads KKFKFSRYFPTKVRTLVAD. A helical membrane pass occupies residues 773-792; it reads FSIVFSILLFCGIDACFGLQ. The Extracellular segment spans residues 793 to 820; the sequence is TPKLHVPNVIKPTRPDRGWFVAPFGKNP. Residues 821–839 form a helical membrane-spanning segment; that stretch reads WWVYPASILPALLVTILIF. At 840-858 the chain is on the cytoplasmic side; sequence MDQQITAVIVNRKENKLRK. The chain crosses the membrane as a helical span at residues 859-875; the sequence is AAGYHLDLFWVGILMAL. Residues 876–880 are Extracellular-facing; that stretch reads CSFMG. The chain crosses the membrane as a helical span at residues 881–900; that stretch reads LPWYVAATVISIAHIDSLKM. The Cytoplasmic portion of the chain corresponds to 901-920; sequence ETETSAPGEQPQFLGVREQR. A helical membrane pass occupies residues 921-940; that stretch reads VTGVMVFILTGISVFLAPIL. The Extracellular segment spans residues 941-945; it reads KYIPM. Residues 946-966 traverse the membrane as a helical segment; it reads PVLYGVFLYMGVASLNGIQFW. Over 967–992 the chain is Cytoplasmic; that stretch reads DRCKLFLMPAKHQPDHAFLRHVPLRR. Residues 993 to 1010 form a helical membrane-spanning segment; the sequence is IHLFTLVQILCLALLWIL. The Extracellular segment spans residues 1011-1015; sequence KSTMA. A helical transmembrane segment spans residues 1016-1033; sequence AIIFPVMILGLIIVRRLL. Topologically, residues 1034 to 1112 are cytoplasmic; the sequence is DLIFSQHDLA…KRSSSWSHSL (79 aa). Basic and acidic residues predominate over residues 1055-1074; it reads KESDRKKRRKEVHENTDKEP. The disordered stretch occupies residues 1055-1112; that stretch reads KESDRKKRRKEVHENTDKEPQFLPPSVVKIPMEGIPSDPQNGIHCVGRKRSSSWSHSL.

It belongs to the anion exchanger (TC 2.A.31) family. In terms of tissue distribution, observed in hepatocytes and in the apical region of bile duct intrahepatic cholangiocytes of liver. Also observed in uroepithelium cells lining the outer pelvic wall of the kidney (at protein level). Highly expressed in colon, distal colon, liver, kidney and testis. Moderate expression in duodenum and stomach and weak expression in heart. In kidney, very weakly expressed in the inner medulla, but abundantly expressed in cortex and outer medulla in the medullary thick ascending and cortical thick ascending limbs of the loop of Henle.

The protein localises to the basolateral cell membrane. The protein resides in the apical cell membrane. The enzyme catalyses 2 hydrogencarbonate(out) + Na(+)(out) = 2 hydrogencarbonate(in) + Na(+)(in). It carries out the reaction 3 hydrogencarbonate(out) + Na(+)(out) = 3 hydrogencarbonate(in) + Na(+)(in). Functionally, mediates sodium- and bicarbonate-dependent electrogenic sodium bicarbonate cotransport, with a Na(+):HCO3(-) stoichiometry varying from 1:2 to 1:3. The chain is Electrogenic sodium bicarbonate cotransporter 4 from Rattus norvegicus (Rat).